The sequence spans 225 residues: Transcription factor MYB1 (225 aa).

2 consecutive HTH myb-type domains span residues 11 to 67 (LGRV…KPSI) and 68 to 118 (KRGH…YKKH). DNA-binding regions (H-T-H motif) lie at residues 39–63 (WKRV…LNYL) and 91–114 (WSLI…NTHL).

In terms of assembly, no interactions with bHLH.

It localises to the nucleus. In terms of biological role, activates DODA1 and CYP76AD1 in the betalain red pigment pathway. In Beta vulgaris (Sugar beet), this protein is Transcription factor MYB1.